The following is a 569-amino-acid chain: AA9 family lytic polysaccharide monooxygenase A (569 aa).

The first 16 residues, 1–16, serve as a signal peptide directing secretion; sequence MRIFSLALGFLPLVAG. Residues His-17 and His-99 each contribute to the Cu(2+) site. Cys-59 and Cys-189 form a disulfide bridge. Asn-112 is a glycosylation site (N-linked (GlcNAc...) asparagine). Residues His-174 and Gln-184 each contribute to the O2 site. Tyr-186 contacts Cu(2+). 2 N-linked (GlcNAc...) asparagine glycosylation sites follow: Asn-244 and Asn-381. Low complexity predominate over residues 399 to 424; the sequence is AADATATATATTEDAEATTAAEAAAT. Residues 399-439 are disordered; the sequence is AADATATATATTEDAEATTAAEAAATSGAGRPGRGHGHGRG. N-linked (GlcNAc...) asparagine glycosylation occurs at Asn-472.

It belongs to the polysaccharide monooxygenase AA9 family. Requires Cu(2+) as cofactor.

It localises to the secreted. It catalyses the reaction [(1-&gt;4)-beta-D-glucosyl]n+m + reduced acceptor + O2 = 4-dehydro-beta-D-glucosyl-[(1-&gt;4)-beta-D-glucosyl]n-1 + [(1-&gt;4)-beta-D-glucosyl]m + acceptor + H2O.. Functionally, lytic polysaccharide monooxygenase (LPMO) that depolymerizes crystalline and amorphous polysaccharides via the oxidation of scissile alpha- or beta-(1-4)-glycosidic bonds, yielding C4 oxidation products. Catalysis by LPMOs requires the reduction of the active-site copper from Cu(II) to Cu(I) by a reducing agent and H(2)O(2) or O(2) as a cosubstrate. This is AA9 family lytic polysaccharide monooxygenase A from Emericella nidulans (strain FGSC A4 / ATCC 38163 / CBS 112.46 / NRRL 194 / M139) (Aspergillus nidulans).